The primary structure comprises 444 residues: Sonic hedgehog protein (444 aa).

A signal peptide spans M1–A24. C25 is lipidated: N-palmitoyl cysteine. The short motif at K33–K39 is the Cardin-Weintraub element. 7 residues coordinate Ca(2+): E90, E91, D96, T126, E127, D130, and D132. Positions 141, 148, and 183 each coordinate Zn(2+). Residue G198 is the site of Cholesterol glycine ester attachment. Repeat copies occupy residues Q386–H393, Q394–H401, and V403–H409. The interval Q386–H409 is 3 X 8 AA tandem repeats of Q-V-D-L-Q-S-H-H.

It belongs to the hedgehog family. Interacts with HHATL/GUP1 which negatively regulates HHAT-mediated palmitoylation of the SHH N-terminus. Interacts with BOC and CDON. Interacts with HHIP. Interacts with DISP1 via its cholesterol anchor. Interacts with SCUBE2. As to quaternary structure, multimer. The C-terminal domain displays an autoproteolysis activity and a cholesterol transferase activity. Both activities result in the cleavage of the full-length protein and covalent attachment of a cholesterol moiety to the C-terminal of the newly generated N-terminal fragment (ShhN). Cholesterylation is required for the sonic hedgehog protein N-product targeting to lipid rafts and multimerization. ShhN is the active species in both local and long-range signaling, whereas the C-product (ShhC) is degraded in the reticulum endoplasmic. Post-translationally, N-palmitoylation by HHAT of ShhN is required for sonic hedgehog protein N-product multimerization and full activity. It is a prerequisite for the membrane-proximal positioning and the subsequent shedding of this N-terminal peptide. In terms of processing, the lipidated N- and C-terminal peptides of ShhNp can be cleaved (shedding). The N-terminal palmitoylated peptide is cleaved at the Cardin-Weintraub (CW) motif site. The cleavage reduced the interactions with heparan sulfate. The cleavage is enhanced by SCUBE2. As to expression, strongly expressed in notochord and neural floor plate during embryogenesis. In tadpole, high expression is observed in pancreas/stomach, moderate expression in tail, and low expression in intestine, brain, and hind limb.

The protein resides in the endoplasmic reticulum membrane. It localises to the golgi apparatus membrane. The protein localises to the cell membrane. The catalysed reaction is glycyl-L-cysteinyl-[protein] + cholesterol + H(+) = [protein]-C-terminal glycyl cholesterol ester + N-terminal L-cysteinyl-[protein]. In terms of biological role, the C-terminal part of the sonic hedgehog protein precursor displays an autoproteolysis and a cholesterol transferase activity. Both activities result in the cleavage of the full-length protein into two parts (ShhN and ShhC) followed by the covalent attachment of a cholesterol moiety to the C-terminal of the newly generated ShhN. Both activities occur in the endoplasmic reticulum. Once cleaved, ShhC is degraded in the endoplasmic reticulum. Its function is as follows. The dually lipidated sonic hedgehog protein N-product (ShhNp) is a morphogen which is essential for a variety of patterning events during development. Induces ventral cell fate in the neural tube and somites. Involved in the patterning of the anterior-posterior axis of the developing limb bud. Essential for axon guidance. Binds to the patched (PTCH1) receptor, which functions in association with smoothened (SMO), to activate the transcription of target genes. In the absence of SHH, PTCH1 represses the constitutive signaling activity of SMO. This chain is Sonic hedgehog protein, found in Xenopus laevis (African clawed frog).